A 326-amino-acid polypeptide reads, in one-letter code: 3-oxopimeloyl-[acyl-carrier-protein] synthase (326 aa).

Residues cysteine 115 and histidine 253 contribute to the active site. Residues 254-258 are ACP-binding; it reads QANIR. The active site involves asparagine 283.

The protein belongs to the thiolase-like superfamily. BioZ family.

It carries out the reaction malonyl-[ACP] + an acyl-CoA + H(+) = a 3-oxoacyl-[ACP] + CO2 + CoA. The catalysed reaction is glutaryl-CoA + malonyl-[ACP] + H(+) = 3-oxo-6-carboxyhexanoyl-[ACP] + CO2 + CoA. Its pathway is cofactor biosynthesis; biotin biosynthesis. Involved in the formation of the biotin precursor pimeloyl-ACP. Catalyzes the condensation of glutaryl-CoA, an intermediate in lysine degradation, with malonyl-ACP to produce 3-oxopimeloyl-ACP. The protein is 3-oxopimeloyl-[acyl-carrier-protein] synthase of Brucella abortus (strain 2308).